A 362-amino-acid polypeptide reads, in one-letter code: uncharacterized protein (362 aa).

This is an uncharacterized protein from Escherichia coli (strain K12).